A 458-amino-acid polypeptide reads, in one-letter code: Na(+)/H(+) antiporter NhaA (458 aa).

Transmembrane regions (helical) follow at residues 27-47 (FLHVEAFSGIVLLLAAAAALI), 78-98 (LHFWVNDALMTVFFLVAGMEI), 114-134 (ILPIVSAIGGVCFPALIYLSF), 143-163 (GWAVPTATDIAFALGILALLG), 172-192 (VILLSLAIIDDIIAVLIIAFF), 201-221 (GLAIAIAGIALVLFFQWIGLA), 222-242 (SAWLYILPGAIIWWGLMITGV), 249-269 (VILGMMTPVFPTRTLVAPLTI), 316-336 (PWVAYGVMPIFAFANAGVSFA), 346-366 (FLVVLSVVIGLFIGKPLGIIT), 388-408 (ILLIGFLAGIGFTMSIFVSML), and 421-441 (IGVLCGSGLSALAGLGYGLIY).

This sequence belongs to the NhaA Na(+)/H(+) (TC 2.A.33) antiporter family.

The protein resides in the cell inner membrane. The enzyme catalyses Na(+)(in) + 2 H(+)(out) = Na(+)(out) + 2 H(+)(in). Its function is as follows. Na(+)/H(+) antiporter that extrudes sodium in exchange for external protons. This chain is Na(+)/H(+) antiporter NhaA, found in Bartonella quintana (strain Toulouse) (Rochalimaea quintana).